The chain runs to 294 residues: 4-hydroxy-tetrahydrodipicolinate synthase (294 aa).

Thr-44 provides a ligand contact to pyruvate. The active-site Proton donor/acceptor is the Tyr-132. The active-site Schiff-base intermediate with substrate is the Lys-160. Position 202 (Val-202) interacts with pyruvate.

It belongs to the DapA family. Homotetramer; dimer of dimers.

It localises to the cytoplasm. The enzyme catalyses L-aspartate 4-semialdehyde + pyruvate = (2S,4S)-4-hydroxy-2,3,4,5-tetrahydrodipicolinate + H2O + H(+). Its pathway is amino-acid biosynthesis; L-lysine biosynthesis via DAP pathway; (S)-tetrahydrodipicolinate from L-aspartate: step 3/4. Functionally, catalyzes the condensation of (S)-aspartate-beta-semialdehyde [(S)-ASA] and pyruvate to 4-hydroxy-tetrahydrodipicolinate (HTPA). In Leptospira borgpetersenii serovar Hardjo-bovis (strain L550), this protein is 4-hydroxy-tetrahydrodipicolinate synthase.